Here is a 543-residue protein sequence, read N- to C-terminus: Cobyric acid synthase (543 aa).

Residues 260-483 (MLDIVLVDLP…LHGVFDADGF (224 aa)) form the GATase cobBQ-type domain. Cys-346 acts as the Nucleophile in catalysis. His-475 is a catalytic residue.

This sequence belongs to the CobB/CobQ family. CobQ subfamily.

The protein operates within cofactor biosynthesis; adenosylcobalamin biosynthesis. Catalyzes amidations at positions B, D, E, and G on adenosylcobyrinic A,C-diamide. NH(2) groups are provided by glutamine, and one molecule of ATP is hydrogenolyzed for each amidation. The chain is Cobyric acid synthase from Nitratidesulfovibrio vulgaris (strain ATCC 29579 / DSM 644 / CCUG 34227 / NCIMB 8303 / VKM B-1760 / Hildenborough) (Desulfovibrio vulgaris).